The sequence spans 494 residues: Lysine--tRNA ligase (494 aa).

Mg(2+)-binding residues include Glu-407 and Glu-414.

The protein belongs to the class-II aminoacyl-tRNA synthetase family. Homodimer. Requires Mg(2+) as cofactor.

It is found in the cytoplasm. The catalysed reaction is tRNA(Lys) + L-lysine + ATP = L-lysyl-tRNA(Lys) + AMP + diphosphate. This Lactococcus lactis subsp. cremoris (strain SK11) protein is Lysine--tRNA ligase.